A 152-amino-acid polypeptide reads, in one-letter code: MTIWVDADACPNVIKEILYRAAERMQMPLVLVANQSLRVPPSRFIRTLRVAAGFDVADNEIVRQCEAGDLVITADIPLAAEAIEKGAAALNSRGERYTPATIRERLTMRDFMDTLRASGIQTGGPDSLSQRDRQAFAAELEKWWLEVQRSRG.

This sequence belongs to the UPF0178 family.

The chain is UPF0178 protein YaiI from Shigella flexneri.